The primary structure comprises 440 residues: Glutamyl-tRNA reductase (440 aa).

Residues 50–53 (TCNR), serine 109, 114–116 (EPQ), and glutamine 120 each bind substrate. Cysteine 51 (nucleophile) is an active-site residue. 189–194 (GAGEMA) serves as a coordination point for NADP(+).

The protein belongs to the glutamyl-tRNA reductase family. Homodimer.

The catalysed reaction is (S)-4-amino-5-oxopentanoate + tRNA(Glu) + NADP(+) = L-glutamyl-tRNA(Glu) + NADPH + H(+). The protein operates within porphyrin-containing compound metabolism; protoporphyrin-IX biosynthesis; 5-aminolevulinate from L-glutamyl-tRNA(Glu): step 1/2. Catalyzes the NADPH-dependent reduction of glutamyl-tRNA(Glu) to glutamate 1-semialdehyde (GSA). This Nitratidesulfovibrio vulgaris (strain ATCC 29579 / DSM 644 / CCUG 34227 / NCIMB 8303 / VKM B-1760 / Hildenborough) (Desulfovibrio vulgaris) protein is Glutamyl-tRNA reductase.